The primary structure comprises 491 residues: Probable glycine dehydrogenase (decarboxylating) subunit 2 (491 aa).

An N6-(pyridoxal phosphate)lysine modification is found at lysine 273.

Belongs to the GcvP family. C-terminal subunit subfamily. As to quaternary structure, the glycine cleavage system is composed of four proteins: P, T, L and H. In this organism, the P 'protein' is a heterodimer of two subunits. Pyridoxal 5'-phosphate serves as cofactor.

The catalysed reaction is N(6)-[(R)-lipoyl]-L-lysyl-[glycine-cleavage complex H protein] + glycine + H(+) = N(6)-[(R)-S(8)-aminomethyldihydrolipoyl]-L-lysyl-[glycine-cleavage complex H protein] + CO2. In terms of biological role, the glycine cleavage system catalyzes the degradation of glycine. The P protein binds the alpha-amino group of glycine through its pyridoxal phosphate cofactor; CO(2) is released and the remaining methylamine moiety is then transferred to the lipoamide cofactor of the H protein. In Bacillus thuringiensis (strain Al Hakam), this protein is Probable glycine dehydrogenase (decarboxylating) subunit 2.